The primary structure comprises 500 residues: Tektin-like protein 1 (500 aa).

The segment at 1 to 25 (MPVLLPSTDRDQDSRVGAPEWHQAA) is disordered. Phosphoserine is present on S14. Positions 198-229 (MLVWEREELKSMKRKMEKDMERSEALLKALAS) form a coiled coil. Positions 265 to 286 (VDITRPPTPRTQGLKTPPPDPV) are disordered. Y372 is subject to Phosphotyrosine. A coiled-coil region spans residues 422–448 (LTRHNLQMEKNLKELRTTHDNLAWSLN).

In terms of assembly, microtubule inner protein component of sperm flagellar doublet microtubules.

The protein localises to the cytoplasm. Its subcellular location is the cytoskeleton. It is found in the flagellum axoneme. Microtubule inner protein (MIP) part of the dynein-decorated doublet microtubules (DMTs) in sperm flagellar axoneme, which is required for motile flagellum beating. Forms an extensive interaction network cross-linking the lumen of axonemal doublet microtubules. The chain is Tektin-like protein 1 from Rattus norvegicus (Rat).